We begin with the raw amino-acid sequence, 349 residues long: tRNA (guanine(26)-N(2))-dimethyltransferase (349 aa).

In terms of domain architecture, Trm1 methyltransferase spans 1 to 343 (MEVEEGRARV…ADRDVVVKIL (343 aa)). Positions 25, 50, 66, 92, and 93 each coordinate S-adenosyl-L-methionine.

This sequence belongs to the class I-like SAM-binding methyltransferase superfamily. Trm1 family.

It carries out the reaction guanosine(26) in tRNA + 2 S-adenosyl-L-methionine = N(2)-dimethylguanosine(26) in tRNA + 2 S-adenosyl-L-homocysteine + 2 H(+). In terms of biological role, dimethylates a single guanine residue at position 26 of a number of tRNAs using S-adenosyl-L-methionine as donor of the methyl groups. The sequence is that of tRNA (guanine(26)-N(2))-dimethyltransferase from Archaeoglobus fulgidus (strain ATCC 49558 / DSM 4304 / JCM 9628 / NBRC 100126 / VC-16).